Here is a 339-residue protein sequence, read N- to C-terminus: Phenylalanine--tRNA ligase alpha subunit (339 aa).

Glu250 is a binding site for Mg(2+).

It belongs to the class-II aminoacyl-tRNA synthetase family. Phe-tRNA synthetase alpha subunit type 1 subfamily. Tetramer of two alpha and two beta subunits. Mg(2+) is required as a cofactor.

The protein localises to the cytoplasm. It catalyses the reaction tRNA(Phe) + L-phenylalanine + ATP = L-phenylalanyl-tRNA(Phe) + AMP + diphosphate + H(+). This Bacteroides fragilis (strain ATCC 25285 / DSM 2151 / CCUG 4856 / JCM 11019 / LMG 10263 / NCTC 9343 / Onslow / VPI 2553 / EN-2) protein is Phenylalanine--tRNA ligase alpha subunit.